Here is a 152-residue protein sequence, read N- to C-terminus: Large ribosomal subunit protein bL9 (152 aa).

This sequence belongs to the bacterial ribosomal protein bL9 family.

In terms of biological role, binds to the 23S rRNA. The polypeptide is Large ribosomal subunit protein bL9 (Synechococcus sp. (strain CC9311)).